Here is a 677-residue protein sequence, read N- to C-terminus: Epithelial splicing regulatory protein 1 (677 aa).

3 consecutive RRM domains span residues 225-302, 326-406, and 445-525; these read TVVR…KATG, VIVR…RSTA, and DCVR…QCSA. A Phosphoserine modification is found at serine 543. Arginine 578 carries the omega-N-methylarginine modification.

It belongs to the ESRP family.

It is found in the nucleus. Functionally, mRNA splicing factor that regulates the formation of epithelial cell-specific isoforms. Specifically regulates the expression of FGFR2-IIIb, an epithelial cell-specific isoform of FGFR2. Also regulates the splicing of CD44, CTNND1, ENAH, 3 transcripts that undergo changes in splicing during the epithelial-to-mesenchymal transition (EMT). Acts by directly binding specific sequences in mRNAs. Binds the GU-rich sequence motifs in the ISE/ISS-3, a cis-element regulatory region present in the mRNA of FGFR2. Regulates splicing and expression of genes involved in inner ear development, auditory hair cell differentiation, and cell fate specification in the cochlear epithelium. In Rattus norvegicus (Rat), this protein is Epithelial splicing regulatory protein 1 (Esrp1).